The following is a 177-amino-acid chain: ATP synthase subunit delta (177 aa).

This sequence belongs to the ATPase delta chain family. In terms of assembly, F-type ATPases have 2 components, F(1) - the catalytic core - and F(0) - the membrane proton channel. F(1) has five subunits: alpha(3), beta(3), gamma(1), delta(1), epsilon(1). F(0) has three main subunits: a(1), b(2) and c(10-14). The alpha and beta chains form an alternating ring which encloses part of the gamma chain. F(1) is attached to F(0) by a central stalk formed by the gamma and epsilon chains, while a peripheral stalk is formed by the delta and b chains.

The protein resides in the cell membrane. F(1)F(0) ATP synthase produces ATP from ADP in the presence of a proton or sodium gradient. F-type ATPases consist of two structural domains, F(1) containing the extramembraneous catalytic core and F(0) containing the membrane proton channel, linked together by a central stalk and a peripheral stalk. During catalysis, ATP synthesis in the catalytic domain of F(1) is coupled via a rotary mechanism of the central stalk subunits to proton translocation. Its function is as follows. This protein is part of the stalk that links CF(0) to CF(1). It either transmits conformational changes from CF(0) to CF(1) or is implicated in proton conduction. This Buchnera aphidicola subsp. Schizaphis graminum (strain Sg) protein is ATP synthase subunit delta.